The primary structure comprises 244 residues: Carboxy-S-adenosyl-L-methionine synthase (244 aa).

S-adenosyl-L-methionine-binding positions include Tyr38, 63 to 65, 88 to 89, 116 to 117, Asn131, and Arg198; these read GCS, DN, and DI.

It belongs to the class I-like SAM-binding methyltransferase superfamily. Cx-SAM synthase family. Homodimer.

The catalysed reaction is prephenate + S-adenosyl-L-methionine = carboxy-S-adenosyl-L-methionine + 3-phenylpyruvate + H2O. Its function is as follows. Catalyzes the conversion of S-adenosyl-L-methionine (SAM) to carboxy-S-adenosyl-L-methionine (Cx-SAM). This is Carboxy-S-adenosyl-L-methionine synthase from Haemophilus ducreyi (strain 35000HP / ATCC 700724).